Consider the following 214-residue polypeptide: Attacin (214 aa).

The N-terminal stretch at Met1 to His19 is a signal peptide. The propeptide occupies Val20–Arg26.

This sequence belongs to the attacin/sarcotoxin-2 family. As to expression, highest expression in fat body and hemocytes and to a much lesser extent in Malpighian tubules, silk gland and midgut.

The protein resides in the secreted. Functionally, hemolymph antibacterial protein. Has a wide spectrum of activity against both Gram-positive and Gram-negative bacteria. The sequence is that of Attacin from Bombyx mori (Silk moth).